Reading from the N-terminus, the 281-residue chain is Hepatitis A virus cellular receptor 2 homolog (281 aa).

The first 19 residues, 1–19, serve as a signal peptide directing secretion; sequence MFSGLTLNCVLLLLQLLLA. In terms of domain architecture, Ig-like V-type spans 20 to 125; sequence RSLENAYVFE…PGLMNDKKLE (106 aa). Residues 20–193 lie on the Extracellular side of the membrane; sequence RSLENAYVFE…KDSGETIRTA (174 aa). Intrachain disulfides connect C38-C111, C52-C63, and C58-C110. A 1,2-diacyl-sn-glycero-3-phospho-L-serine is bound by residues S61 and Q62. N74 and N100 each carry an N-linked (GlcNAc...) asparagine glycan. Residue R112 participates in a 1,2-diacyl-sn-glycero-3-phospho-L-serine binding. Ca(2+)-binding residues include F115 and G117. M119 is a binding site for a 1,2-diacyl-sn-glycero-3-phospho-L-serine. Residue N120 coordinates Ca(2+). Residues 139-160 are disordered; it reads QTAHGDSTTASPRTLTTERNGS. The O-linked (GalNAc...) threonine glycan is linked to T146. N-linked (GlcNAc...) asparagine glycosylation occurs at N172. Residues 194–214 traverse the membrane as a helical segment; that stretch reads IHIGVGVSAGLTLALIIGVLI. At 215-281 the chain is on the cytoplasmic side; sequence LKWYSCKKKK…YCYVNSQQPS (67 aa). The tract at residues 252–270 is interaction with BAG6; that stretch reads EENIYTIEENVYEVENSNE. Y256 bears the Phosphotyrosine; by ITK mark.

This sequence belongs to the immunoglobulin superfamily. TIM family. As to quaternary structure, interacts with HMGB1; impairs HMGB1 binding to B-DNA and likely HMGB1-mediated innate immune response. Interacts with BAG6. Interacts (phosphorylated) with PIK3R1 and PIK3R2. Interacts (not dependent on its phosphorylation status) with FYN. Interacts (in basal state T-cells) with VAV1; AKT1/2, LCP2, ZAP70, SYK, PIK3R1, FYN, SH3BP2 and SH2D2A. Interacts (in activated T-cells) with LCK and PLCG. Interacts with ILF3; this interaction promotes ILF3 ubiquitination and degradation. Post-translationally, phosphorylated on tyrosine residues; modestly increased after TCR/CD28 stimulation. Can be phosphorylated in the cytoplasmic domain by FYN. Phosphorylation at Tyr-256 is increased by stimulation with ligand LGALS9. In terms of processing, N-glycosylated. Expressed in T-helper type 1 lymphocytes. Not expressed by naive T-cells but up-regulated as they differentiate into T-helper-1 cells. Also expressed by differentiated type 1 CD8+ cytotoxic T-cells. Expressed on peritoneal exudate macrophages, monocytes, and splenic dendritic cells (DCs). Expression on natural killer (NK) cells is inversely associated with IFN-gamma production during the initial 24 hours of LPS-induced endotoxic shock. Expressed on mast cells.

Its subcellular location is the membrane. The protein resides in the cell junction. It localises to the secreted. Its function is as follows. Cell surface receptor implicated in modulating innate and adaptive immune responses. Generally accepted to have an inhibiting function. Reports on stimulating functions suggest that the activity may be influenced by the cellular context and/or the respective ligand. Regulates macrophage activation. Inhibits T-helper type 1 lymphocyte (Th1)-mediated auto- and alloimmune responses and promotes immunological tolerance. In CD8+ cells attenuates TCR-induced signaling, specifically by blocking NF-kappaB and NFAT promoter activities resulting in the loss of IL-2 secretion. The function may implicate its association with LCK proposed to impair phosphorylation of TCR subunits. In contrast, shown to activate TCR-induced signaling in T-cells probably implicating ZAP70, LCP2, LCK and FYN. Expressed on Treg cells can inhibit Th17 cell responses. Receptor for LGALS9. Binding to LGALS9 is believed to result in suppression of T-cell responses; the resulting apoptosis of antigen-specific cells may implicate HAVCR2 phosphorylation and disruption of its association with BAG6. Binding to LGALS9 is proposed to be involved in innate immune response to intracellular pathogens. Expressed on Th1 cells interacts with LGALS9 expressed on Mycobacterium tuberculosis-infected macrophages to stimulate antibactericidal activity including IL-1 beta secretion and to restrict intracellular bacterial growth. However, the function as receptor for LGALS9 has been challenged. Also reported to enhance CD8+ T-cell responses to an acute infection such as by Listeria monocytogenes. Receptor for phosphatidylserine (PtSer); PtSer-binding is calcium-dependent. May recognize PtSer on apoptotic cells leading to their phagocytosis. Mediates the engulfment of apoptotic cells by dendritic cells. Expressed on T-cells, promotes conjugation but not engulfment of apoptotic cells. Expressed on dendritic cells (DCs) positively regulates innate immune response and in synergy with Toll-like receptors promotes secretion of TNF-alpha. In tumor-imfiltrating DCs suppresses nucleic acid-mediated innate immune repsonse by interaction with HMGB1 and interfering with nucleic acid-sensing and trafficking of nucleid acids to endosomes. Can enhance mast cell production of Th2 cytokines Il-4, IL-6 and IL-13. Expressed on natural killer (NK) cells acts as a coreceptor to enhance IFN-gamma production in response to LGALS9. In contrast, shown to suppress NK cell-mediated cytotoxicity. Negatively regulates NK cell function in LPS-induced endotoxic shock. This chain is Hepatitis A virus cellular receptor 2 homolog (Havcr2), found in Mus musculus (Mouse).